A 211-amino-acid chain; its full sequence is DNA/RNA-binding protein ALBA2 (211 aa).

A compositionally biased stretch (basic and acidic residues) spans 84 to 99 (NSGLKKNAKNEDKKSG). The tract at residues 84 to 121 (NSGLKKNAKNEDKKSGDEEEEEEEEEEDEENNKNKEAN) is disordered. Acidic residues predominate over residues 100 to 113 (DEEEEEEEEEEDEE).

This sequence belongs to the histone-like Alba family. Identified in a TARE6-associated complex consisting of over 30 proteins and including ALBA1, ALBA2 and ALBA4; the complex binds to the non-coding subtelomeric repeat region TARE6.

The protein localises to the nucleus. The protein resides in the chromosome. Its subcellular location is the telomere. It is found in the cytoplasm. Its function is as follows. Possesses DNA- and RNA-binding activities. Binds to DNA with relaxed sequence specificity. Associates with the subtelomeric TARE6 repeats. This Plasmodium falciparum (isolate 3D7) protein is DNA/RNA-binding protein ALBA2.